The chain runs to 113 residues: Large ribosomal subunit protein uL22 (113 aa).

This sequence belongs to the universal ribosomal protein uL22 family. Part of the 50S ribosomal subunit.

Functionally, this protein binds specifically to 23S rRNA; its binding is stimulated by other ribosomal proteins, e.g. L4, L17, and L20. It is important during the early stages of 50S assembly. It makes multiple contacts with different domains of the 23S rRNA in the assembled 50S subunit and ribosome. The globular domain of the protein is located near the polypeptide exit tunnel on the outside of the subunit, while an extended beta-hairpin is found that lines the wall of the exit tunnel in the center of the 70S ribosome. The sequence is that of Large ribosomal subunit protein uL22 from Bacillus cytotoxicus (strain DSM 22905 / CIP 110041 / 391-98 / NVH 391-98).